The following is a 494-amino-acid chain: Probable cytosol aminopeptidase (494 aa).

The Mn(2+) site is built by Lys-260 and Asp-265. Residue Lys-272 is part of the active site. Positions 283, 342, and 344 each coordinate Mn(2+). Arg-346 is an active-site residue.

This sequence belongs to the peptidase M17 family. It depends on Mn(2+) as a cofactor.

It localises to the cytoplasm. The catalysed reaction is Release of an N-terminal amino acid, Xaa-|-Yaa-, in which Xaa is preferably Leu, but may be other amino acids including Pro although not Arg or Lys, and Yaa may be Pro. Amino acid amides and methyl esters are also readily hydrolyzed, but rates on arylamides are exceedingly low.. It carries out the reaction Release of an N-terminal amino acid, preferentially leucine, but not glutamic or aspartic acids.. Its function is as follows. Presumably involved in the processing and regular turnover of intracellular proteins. Catalyzes the removal of unsubstituted N-terminal amino acids from various peptides. The sequence is that of Probable cytosol aminopeptidase from Bacillus thuringiensis (strain Al Hakam).